We begin with the raw amino-acid sequence, 300 residues long: Cell adhesion molecule CEACAM19 (300 aa).

The N-terminal stretch at 1–32 (MEIPMGTQGCFSKSLLLSASILVLWMLQGSQA) is a signal peptide. At 33-157 (ALYIQKIPEQ…PSTHLPTNAG (125 aa)) the chain is on the extracellular side. Residue N104 is glycosylated (N-linked (GlcNAc...) asparagine). Residues 158–178 (ILAATIIGSLAAGALLISCIA) traverse the membrane as a helical segment. The Cytoplasmic portion of the chain corresponds to 179–300 (YLLVTRNWRG…APYCQLVPTS (122 aa)). A disordered region spans residues 259–291 (SINPARPLPTPPHLQAEPENHQYQQDLLNPDPA).

It belongs to the immunoglobulin superfamily. CEA family. As to expression, ubiquitous with highest expression in prostate, uterus, fetal brain, mammary gland, adrenal gland, skeletal muscle, small intestine, and kidney, and lower expression in lung, cerebellum, testis, liver, pancreas, bone marrow and ovary.

The protein resides in the membrane. This chain is Cell adhesion molecule CEACAM19, found in Homo sapiens (Human).